The following is a 376-amino-acid chain: Erythronate-4-phosphate dehydrogenase (376 aa).

Serine 45 and threonine 66 together coordinate substrate. Residues 126 to 127 (QV), aspartate 146, threonine 174, 201 to 203 (ASR), and aspartate 227 contribute to the NAD(+) site. Arginine 203 is a catalytic residue. Residue glutamate 232 is part of the active site. Catalysis depends on histidine 249, which acts as the Proton donor. Glycine 252 is a binding site for NAD(+). A substrate-binding site is contributed by tyrosine 253.

It belongs to the D-isomer specific 2-hydroxyacid dehydrogenase family. PdxB subfamily. Homodimer.

Its subcellular location is the cytoplasm. It catalyses the reaction 4-phospho-D-erythronate + NAD(+) = (R)-3-hydroxy-2-oxo-4-phosphooxybutanoate + NADH + H(+). The protein operates within cofactor biosynthesis; pyridoxine 5'-phosphate biosynthesis; pyridoxine 5'-phosphate from D-erythrose 4-phosphate: step 2/5. Catalyzes the oxidation of erythronate-4-phosphate to 3-hydroxy-2-oxo-4-phosphonooxybutanoate. The polypeptide is Erythronate-4-phosphate dehydrogenase (Ectopseudomonas mendocina (strain ymp) (Pseudomonas mendocina)).